A 1686-amino-acid chain; its full sequence is A disintegrin and metalloproteinase with thrombospondin motifs 7 (1686 aa).

The signal sequence occupies residues 1-27; the sequence is MPGGPSPRSPAPLLRPLLLLLCALAPG. Positions 28 to 236 are excised as a propeptide; it reads APGPAPGRAT…RPRLRRLHQR (209 aa). An N-linked (GlcNAc...) asparagine glycan is attached at asparagine 94. Positions 202–209 match the Cysteine switch motif; sequence STCGVQVY. Cysteine 204 is a binding site for Zn(2+). The Peptidase M12B domain occupies 242–452; sequence KWVETLVVAD…GWGLCLDDPP (211 aa). 11 disulfides stabilise this stretch: cysteine 318–cysteine 372, cysteine 347–cysteine 354, cysteine 366–cysteine 447, cysteine 405–cysteine 431, cysteine 474–cysteine 497, cysteine 485–cysteine 503, cysteine 492–cysteine 522, cysteine 516–cysteine 527, cysteine 550–cysteine 587, cysteine 554–cysteine 592, and cysteine 565–cysteine 577. Histidine 388 contributes to the Zn(2+) binding site. Glutamate 389 is a catalytic residue. Zn(2+)-binding residues include histidine 392 and histidine 398. In terms of domain architecture, Disintegrin spans 462-537; the sequence is VPPGVLYDVS…VPVGFRPEAV (76 aa). The 56-residue stretch at 538–593 folds into the TSP type-1 1 domain; the sequence is DGGWSGWSAWSICSRSCGMGVQSAERQCTQPTPKYKGRYCVGERKRFRLCNLQACP. Residues asparagine 693 and asparagine 778 are each glycosylated (N-linked (GlcNAc...) asparagine). Residues 698 to 809 are spacer; that stretch reads HTVSGTFEEA…PGVHYEYTIH (112 aa). TSP type-1 domains are found at residues 821–880, 881–940, and 942–995; these read PVFS…QPCP, ARWW…NRHV, and CPAT…PLCR. Disordered stretches follow at residues 1024 to 1043, 1080 to 1257, and 1344 to 1396; these read HHLA…TMGN, PSEE…SPDV, and LGHM…PLAP. Residues 1182-1205 are compositionally biased toward polar residues; the sequence is DGLQTPATPESQNDFPVGKDSQSQ. Residues 1210 to 1226 are compositionally biased toward basic and acidic residues; it reads WRDRTNEVFKDDEEPKG. Positions 1360 to 1375 are enriched in low complexity; it reads PESLSPEVPLSSRLLS. 4 consecutive TSP type-1 domains span residues 1411–1459, 1462–1522, 1523–1567, and 1569–1629; these read RNAG…RRCH, PCAT…QPCL, SWYT…PCNT, and PCTQ…EDCE. In terms of domain architecture, PLAC spans 1632–1672; the sequence is EPPRCERDRLSFGFCETLRLLGRCQLPTIRTQCCRSCSPPS. The interval 1666 to 1686 is disordered; that stretch reads RSCSPPSHGAPSRGHQRVARR.

As to quaternary structure, interacts with COMP. It depends on Zn(2+) as a cofactor. In terms of processing, N-glycosylated. Can be O-fucosylated by POFUT2 on a serine or a threonine residue found within the consensus sequence C1-X(2)-(S/T)-C2-G of the TSP type-1 repeat domains where C1 and C2 are the first and second cysteine residue of the repeat, respectively. Fucosylated repeats can then be further glycosylated by the addition of a beta-1,3-glucose residue by the glucosyltransferase, B3GALTL. Fucosylation mediates the efficient secretion of ADAMTS family members. Can also be C-glycosylated with one or two mannose molecules on tryptophan residues within the consensus sequence W-X-X-W of the TPRs. N- and C-glycosylations can also facilitate secretion. O-glycosylated proteoglycan; contains chondroitin sulfate. Post-translationally, may be cleaved by a furin endopeptidase. The precursor is sequentially processed. In terms of tissue distribution, expressed in heart, brain, placenta, lung, liver, skeletal muscle, kidney and pancreas. Detected in meniscus, bone, tendon, cartilage, synovium, fat and ligaments.

Its subcellular location is the secreted. It localises to the extracellular space. The protein localises to the extracellular matrix. Metalloprotease. Was previously shown to degrade COMP. However, a later study found no activity against COMP. In Homo sapiens (Human), this protein is A disintegrin and metalloproteinase with thrombospondin motifs 7 (ADAMTS7).